Consider the following 129-residue polypeptide: uncharacterized protein (129 aa).

The next 3 helical transmembrane spans lie at 15 to 35, 48 to 68, and 107 to 127; these read IFII…IFVF, IFSF…YYFF, and INIF…NLVC.

It is found in the membrane. This is an uncharacterized protein from Saccharomyces cerevisiae (strain ATCC 204508 / S288c) (Baker's yeast).